Here is a 197-residue protein sequence, read N- to C-terminus: MNILIIFASYLLGSLPTGFLIGKYLKNIDLRTIGSGSTGATNVLRNVGKWPALFVFIIDLGKGLIAVKIAQYYTDQGLIEVIAGISAISGHIWPIWLRGKGGKAVATGLGMFLALSWKVGLASLGFFLIVLTKTKYVSLSSISAAILLPIFMFFYLGKFMHSYFFISLIVALLVIWKHRTNITRLLKGEESKINQTQ.

Helical transmembrane passes span M1–I21, W50–A70, G77–L97, M111–L131, V137–G157, and K158–H178.

It belongs to the PlsY family. In terms of assembly, probably interacts with PlsX.

The protein localises to the cell inner membrane. It catalyses the reaction an acyl phosphate + sn-glycerol 3-phosphate = a 1-acyl-sn-glycero-3-phosphate + phosphate. The protein operates within lipid metabolism; phospholipid metabolism. Its function is as follows. Catalyzes the transfer of an acyl group from acyl-phosphate (acyl-PO(4)) to glycerol-3-phosphate (G3P) to form lysophosphatidic acid (LPA). This enzyme utilizes acyl-phosphate as fatty acyl donor, but not acyl-CoA or acyl-ACP. This Prochlorococcus marinus (strain MIT 9301) protein is Glycerol-3-phosphate acyltransferase.